The chain runs to 155 residues: Deoxyuridine 5'-triphosphate nucleotidohydrolase (155 aa).

Substrate-binding positions include 71–73, Asn-84, 88–90, and Lys-98; these read RSG and TID.

The protein belongs to the dUTPase family. Mg(2+) serves as cofactor.

It catalyses the reaction dUTP + H2O = dUMP + diphosphate + H(+). It participates in pyrimidine metabolism; dUMP biosynthesis; dUMP from dCTP (dUTP route): step 2/2. Its function is as follows. This enzyme is involved in nucleotide metabolism: it produces dUMP, the immediate precursor of thymidine nucleotides and it decreases the intracellular concentration of dUTP so that uracil cannot be incorporated into DNA. This Corynebacterium jeikeium (strain K411) protein is Deoxyuridine 5'-triphosphate nucleotidohydrolase.